A 326-amino-acid chain; its full sequence is Acetyl-coenzyme A carboxylase carboxyl transferase subunit alpha (326 aa).

Residues Lys-44–Glu-298 form the CoA carboxyltransferase C-terminal domain.

This sequence belongs to the AccA family. Acetyl-CoA carboxylase is a heterohexamer composed of biotin carboxyl carrier protein (AccB), biotin carboxylase (AccC) and two subunits each of ACCase subunit alpha (AccA) and ACCase subunit beta (AccD).

It is found in the cytoplasm. It carries out the reaction N(6)-carboxybiotinyl-L-lysyl-[protein] + acetyl-CoA = N(6)-biotinyl-L-lysyl-[protein] + malonyl-CoA. The protein operates within lipid metabolism; malonyl-CoA biosynthesis; malonyl-CoA from acetyl-CoA: step 1/1. Functionally, component of the acetyl coenzyme A carboxylase (ACC) complex. First, biotin carboxylase catalyzes the carboxylation of biotin on its carrier protein (BCCP) and then the CO(2) group is transferred by the carboxyltransferase to acetyl-CoA to form malonyl-CoA. This is Acetyl-coenzyme A carboxylase carboxyl transferase subunit alpha from Trichormus variabilis (strain ATCC 29413 / PCC 7937) (Anabaena variabilis).